Consider the following 167-residue polypeptide: Crossover junction endodeoxyribonuclease RuvC (167 aa).

Catalysis depends on residues D11, E71, and D143. Positions 11, 71, and 143 each coordinate Mg(2+).

The protein belongs to the RuvC family. As to quaternary structure, homodimer which binds Holliday junction (HJ) DNA. The HJ becomes 2-fold symmetrical on binding to RuvC with unstacked arms; it has a different conformation from HJ DNA in complex with RuvA. In the full resolvosome a probable DNA-RuvA(4)-RuvB(12)-RuvC(2) complex forms which resolves the HJ. The cofactor is Mg(2+).

It localises to the cytoplasm. The catalysed reaction is Endonucleolytic cleavage at a junction such as a reciprocal single-stranded crossover between two homologous DNA duplexes (Holliday junction).. Functionally, the RuvA-RuvB-RuvC complex processes Holliday junction (HJ) DNA during genetic recombination and DNA repair. Endonuclease that resolves HJ intermediates. Cleaves cruciform DNA by making single-stranded nicks across the HJ at symmetrical positions within the homologous arms, yielding a 5'-phosphate and a 3'-hydroxyl group; requires a central core of homology in the junction. The consensus cleavage sequence is 5'-(A/T)TT(C/G)-3'. Cleavage occurs on the 3'-side of the TT dinucleotide at the point of strand exchange. HJ branch migration catalyzed by RuvA-RuvB allows RuvC to scan DNA until it finds its consensus sequence, where it cleaves and resolves the cruciform DNA. The protein is Crossover junction endodeoxyribonuclease RuvC of Acidiphilium cryptum (strain JF-5).